The primary structure comprises 503 residues: tRNA-guanine(15) transglycosylase (503 aa).

Asp86 acts as the Nucleophile in catalysis. Residue Asp121 coordinates substrate. Zn(2+) contacts are provided by Cys278, Cys280, and Cys283.

It belongs to the archaeosine tRNA-ribosyltransferase family. Zn(2+) is required as a cofactor.

It catalyses the reaction guanosine(15) in tRNA + 7-cyano-7-deazaguanine = 7-cyano-7-carbaguanosine(15) in tRNA + guanine. It participates in tRNA modification; archaeosine-tRNA biosynthesis. Its function is as follows. Exchanges the guanine residue with 7-cyano-7-deazaguanine (preQ0) at position 15 in the dihydrouridine loop (D-loop) of archaeal tRNAs. In Saccharolobus solfataricus (strain ATCC 35092 / DSM 1617 / JCM 11322 / P2) (Sulfolobus solfataricus), this protein is tRNA-guanine(15) transglycosylase.